The chain runs to 566 residues: Proline--tRNA ligase (566 aa).

The protein belongs to the class-II aminoacyl-tRNA synthetase family. ProS type 1 subfamily. Homodimer.

The protein resides in the cytoplasm. It catalyses the reaction tRNA(Pro) + L-proline + ATP = L-prolyl-tRNA(Pro) + AMP + diphosphate. Functionally, catalyzes the attachment of proline to tRNA(Pro) in a two-step reaction: proline is first activated by ATP to form Pro-AMP and then transferred to the acceptor end of tRNA(Pro). As ProRS can inadvertently accommodate and process non-cognate amino acids such as alanine and cysteine, to avoid such errors it has two additional distinct editing activities against alanine. One activity is designated as 'pretransfer' editing and involves the tRNA(Pro)-independent hydrolysis of activated Ala-AMP. The other activity is designated 'posttransfer' editing and involves deacylation of mischarged Ala-tRNA(Pro). The misacylated Cys-tRNA(Pro) is not edited by ProRS. The sequence is that of Proline--tRNA ligase from Shouchella clausii (strain KSM-K16) (Alkalihalobacillus clausii).